The primary structure comprises 274 residues: NH(3)-dependent NAD(+) synthetase (274 aa).

27-34 contacts ATP; that stretch reads GLSGGIDS. Asp-33 provides a ligand contact to Mg(2+). Arg-121 lines the deamido-NAD(+) pocket. Thr-141 serves as a coordination point for ATP. Glu-146 is a Mg(2+) binding site. The ATP site is built by Lys-170 and Ser-192.

The protein belongs to the NAD synthetase family. Homodimer.

The catalysed reaction is deamido-NAD(+) + NH4(+) + ATP = AMP + diphosphate + NAD(+) + H(+). It participates in cofactor biosynthesis; NAD(+) biosynthesis; NAD(+) from deamido-NAD(+) (ammonia route): step 1/1. Its function is as follows. Catalyzes the ATP-dependent amidation of deamido-NAD to form NAD. Uses ammonia as a nitrogen source. This Helicobacter hepaticus (strain ATCC 51449 / 3B1) protein is NH(3)-dependent NAD(+) synthetase.